Reading from the N-terminus, the 260-residue chain is MVLIRVLANLLLLQLSYAQESSELVIGGDECDINEHPFLVALHTARSKRFHCAGTLLNKEWVLTAARCDRKNIRIKFGVHNKNVQNEDEEMRVPKEKHFCVSSKTYTRWDKDIMLIRLKRPVNDGTHIAPLSLPSNPPSVGSVCRIMGWGSITTTKVTYPDVPHCANIKLFDYSVCRDAYKGLPEKSRTLCAGILEGGIDSCKVDNGGPLICNGQFQGIGSWEGHPCAQPLKPALYTNVFEYTDWIEGIIARNTTVTCPP.

Residues 1–18 (MVLIRVLANLLLLQLSYA) form the signal peptide. Positions 19-24 (QESSEL) are excised as a propeptide. The Peptidase S1 domain occupies 25–251 (VIGGDECDIN…YTDWIEGIIA (227 aa)). 6 disulfides stabilise this stretch: C31–C165, C52–C68, C100–C258, C144–C212, C176–C191, and C202–C227. N-linked (GlcNAc...) asparagine glycosylation is present at N253.

Belongs to the peptidase S1 family. Snake venom subfamily. Expressed by the venom gland.

It localises to the secreted. Its function is as follows. Snake venom serine protease homolog that may act in the hemostasis system of the prey. This Bitis gabonica (Gaboon adder) protein is Snake venom serine protease homolog 1.